Reading from the N-terminus, the 183-residue chain is CASP-like protein UU1 (183 aa).

Topologically, residues M1–P33 are cytoplasmic. The chain crosses the membrane as a helical span at residues A34–A54. Residues D55–A72 lie on the Extracellular side of the membrane. A helical transmembrane segment spans residues I73 to I93. At R94–T118 the chain is on the cytoplasmic side. A helical transmembrane segment spans residues Y119–G139. Topologically, residues S140 to T156 are extracellular. N141 carries an N-linked (GlcNAc...) asparagine glycan. A helical membrane pass occupies residues F157–V177. Over K178–A183 the chain is Cytoplasmic.

It belongs to the Casparian strip membrane proteins (CASP) family. Homodimer and heterodimers.

It is found in the cell membrane. This Selaginella moellendorffii (Spikemoss) protein is CASP-like protein UU1.